The following is a 460-amino-acid chain: Multidrug resistance protein NorM (460 aa).

Transmembrane regions (helical) follow at residues V18–G38, V53–A73, L94–A114, T126–L146, A159–Y179, P185–L205, L242–V262, A276–I296, Y315–F335, V349–V369, F391–I411, and M415–L435.

Belongs to the multi antimicrobial extrusion (MATE) (TC 2.A.66.1) family.

The protein localises to the cell inner membrane. In terms of biological role, multidrug efflux pump that functions as a Na(+)/drug antiporter. The sequence is that of Multidrug resistance protein NorM (norM) from Aliivibrio fischeri (strain ATCC 700601 / ES114) (Vibrio fischeri).